Consider the following 579-residue polypeptide: Isocitrate dehydrogenase kinase/phosphatase (579 aa).

Residues A324–M330 and K345 contribute to the ATP site. D380 is a catalytic residue.

It belongs to the AceK family.

The protein localises to the cytoplasm. The enzyme catalyses L-seryl-[isocitrate dehydrogenase] + ATP = O-phospho-L-seryl-[isocitrate dehydrogenase] + ADP + H(+). Its function is as follows. Bifunctional enzyme which can phosphorylate or dephosphorylate isocitrate dehydrogenase (IDH) on a specific serine residue. This is a regulatory mechanism which enables bacteria to bypass the Krebs cycle via the glyoxylate shunt in response to the source of carbon. When bacteria are grown on glucose, IDH is fully active and unphosphorylated, but when grown on acetate or ethanol, the activity of IDH declines drastically concomitant with its phosphorylation. In Xanthomonas axonopodis pv. citri (strain 306), this protein is Isocitrate dehydrogenase kinase/phosphatase.